Consider the following 744-residue polypeptide: Photosystem I P700 chlorophyll a apoprotein A2 (744 aa).

The next 8 helical transmembrane spans lie at 48-71 (LFAT…FHIA), 137-160 (LYAG…LHLQ), 177-201 (LNHH…HVAI), 275-293 (MAHH…GHMY), 337-360 (LHFQ…QHMY), 376-402 (AALY…IFLV), 424-446 (AIIS…LYVH), and 527-545 (FLVH…LILV). Residues Cys569 and Cys578 each contribute to the [4Fe-4S] cluster site. Transmembrane regions (helical) follow at residues 585 to 606 (AFYL…YWHW) and 653 to 675 (LAVW…MFLI). His664, Met672, and Tyr680 together coordinate chlorophyll a. Residue Trp681 coordinates phylloquinone. The helical transmembrane segment at 717–737 (LVGLAHFTVGYVLTYAAFVIA) threads the bilayer.

This sequence belongs to the PsaA/PsaB family. As to quaternary structure, the PsaA/B heterodimer binds the P700 chlorophyll special pair and subsequent electron acceptors. PSI consists of a core antenna complex that captures photons, and an electron transfer chain that converts photonic excitation into a charge separation. The cyanobacterial PSI reaction center is composed of one copy each of PsaA,B,C,D,E,F,I,J,K,L,M and X, and forms trimeric complexes. The cofactor is PSI electron transfer chain: 5 chlorophyll a, 1 chlorophyll a', 2 phylloquinones and 3 4Fe-4S clusters. PSI core antenna: 90 chlorophyll a, 22 carotenoids, 3 phospholipids and 1 galactolipid. P700 is a chlorophyll a/chlorophyll a' dimer, A0 is one or more chlorophyll a, A1 is one or both phylloquinones and FX is a shared 4Fe-4S iron-sulfur center..

The protein localises to the cellular thylakoid membrane. It catalyses the reaction reduced [plastocyanin] + hnu + oxidized [2Fe-2S]-[ferredoxin] = oxidized [plastocyanin] + reduced [2Fe-2S]-[ferredoxin]. In terms of biological role, psaA and PsaB bind P700, the primary electron donor of photosystem I (PSI), as well as the electron acceptors A0, A1 and FX. PSI is a plastocyanin/cytochrome c6-ferredoxin oxidoreductase, converting photonic excitation into a charge separation, which transfers an electron from the donor P700 chlorophyll pair to the spectroscopically characterized acceptors A0, A1, FX, FA and FB in turn. Oxidized P700 is reduced on the lumenal side of the thylakoid membrane by plastocyanin or cytochrome c6. This chain is Photosystem I P700 chlorophyll a apoprotein A2, found in Synechococcus sp. (strain JA-2-3B'a(2-13)) (Cyanobacteria bacterium Yellowstone B-Prime).